The following is a 468-amino-acid chain: Acetyl-CoA decarbonylase/synthase complex subunit gamma 1 (468 aa).

The region spanning 1-61 (MKINSPLEAY…YAKKLAELDR (61 aa)) is the 4Fe-4S domain. Positions 18, 21, 26, and 43 each coordinate [4Fe-4S] cluster.

In terms of assembly, heterodimer of delta and gamma chains. The ACDS complex is made up of alpha, epsilon, beta, gamma and delta chains with a probable stoichiometry of (alpha(2)epsilon(2))(4)-beta(8)-(gamma(1)delta(1))(8). Corrinoid is required as a cofactor. The cofactor is [4Fe-4S] cluster.

The catalysed reaction is 5,6,7,8-tetrahydrosarcinapterin + methyl-Co(III)-[corrinoid Fe-S protein] = 5-methyltetrahydrosarcinapterin + Co(I)-[corrinoid Fe-S protein] + H(+). The protein operates within one-carbon metabolism; methanogenesis from acetate. Part of a complex that catalyzes the reversible cleavage of acetyl-CoA, allowing growth on acetate as sole source of carbon and energy. This is Acetyl-CoA decarbonylase/synthase complex subunit gamma 1 from Methanosarcina thermophila.